A 335-amino-acid chain; its full sequence is Histidinol-phosphatase (335 aa).

This sequence belongs to the PHP hydrolase family. HisK subfamily.

It catalyses the reaction L-histidinol phosphate + H2O = L-histidinol + phosphate. The protein operates within amino-acid biosynthesis; L-histidine biosynthesis; L-histidine from 5-phospho-alpha-D-ribose 1-diphosphate: step 8/9. The polypeptide is Histidinol-phosphatase (HIS2) (Saccharomyces cerevisiae (strain ATCC 204508 / S288c) (Baker's yeast)).